We begin with the raw amino-acid sequence, 477 residues long: ACT domain-containing protein ACR1 (477 aa).

4 consecutive ACT domains span residues leucine 38–glutamine 124, alanine 134–serine 214, methionine 283–glutamine 358, and lysine 361–arginine 441. The Bipartite nuclear localization signal signature appears at lysine 329–arginine 345.

As to expression, expressed in flowers and siliques.

The protein localises to the nucleus. In terms of biological role, may bind amino acids. The protein is ACT domain-containing protein ACR1 of Arabidopsis thaliana (Mouse-ear cress).